We begin with the raw amino-acid sequence, 345 residues long: Phosphoribosylformylglycinamidine cyclo-ligase (345 aa).

Belongs to the AIR synthase family.

It localises to the cytoplasm. The catalysed reaction is 2-formamido-N(1)-(5-O-phospho-beta-D-ribosyl)acetamidine + ATP = 5-amino-1-(5-phospho-beta-D-ribosyl)imidazole + ADP + phosphate + H(+). Its pathway is purine metabolism; IMP biosynthesis via de novo pathway; 5-amino-1-(5-phospho-D-ribosyl)imidazole from N(2)-formyl-N(1)-(5-phospho-D-ribosyl)glycinamide: step 2/2. The sequence is that of Phosphoribosylformylglycinamidine cyclo-ligase from Cronobacter sakazakii (strain ATCC BAA-894) (Enterobacter sakazakii).